The following is a 258-amino-acid chain: Capsid protein (258 aa).

The Bipartite nuclear localization signal signature appears at 3–20 (KRPGDIIISTPGSKVRRR). Residues 41-55 (RKRAWVNRPMYRKPT) carry the Nuclear localization signal motif. Residues 69-86 (CEGPCKVQSFEQRDDVKH) fold into a zinc finger. The Nuclear export signal signature appears at 102 to 123 (LTHRVGKRFCIKSIYILGKIWL). Residues 202–249 (KRFYRLNHHVTYNHQEAGKYENHTENALLLYMACTHASNPVYATLKIR) carry the Bipartite nuclear localization signal motif.

This sequence belongs to the geminiviridae capsid protein family. In terms of assembly, homomultimer. Binds to single-stranded and double-stranded viral DNA. Interacts (via nuclear localization signals) with host importin alpha-1a.

The protein resides in the virion. It localises to the host nucleus. In terms of biological role, encapsidates the viral DNA into characteristic twinned ('geminate') particles. Binds the genomic viral ssDNA and shuttles it into and out of the cell nucleus. The CP of bipartite geminiviruses is not required for cell-to-cell or systemic movement. The chain is Capsid protein from African cassava mosaic virus (isolate West Kenyan 844) (ACMV).